The primary structure comprises 780 residues: Calpain clp-1 (780 aa).

The segment covering 269–282 (DVDPFVRPGPDPDR) has biased composition (basic and acidic residues). Residues 269-300 (DVDPFVRPGPDPDRGGGGSGPSPISPRPTTEP) are disordered. Positions 316–611 (LFEDPQFLAN…FEKMEICNLG (296 aa)) constitute a Calpain catalytic domain. Active-site residues include cysteine 371, histidine 527, and asparagine 551.

This sequence belongs to the peptidase C2 family. In terms of tissue distribution, expressed in muscle and neuronal tissues. Expressed in the ventral and dorsal nerve cord, intestinal and hypodermal tissues.

It localises to the cytoplasm. The protein resides in the myofibril. It is found in the sarcomere. Its subcellular location is the m line. Its function is as follows. Calcium-regulated non-lysosomal thiol-protease which catalyzes limited proteolysis of substrates. Required for assembly and maintenance of integrin attachment complexes which are essential for maintenance of adult muscle. Proteolytic activity is activated in response to increased intracellular Ca(2+) levels during cell degeneration and promotes necrotic cell death. In Caenorhabditis elegans, this protein is Calpain clp-1.